Here is a 448-residue protein sequence, read N- to C-terminus: Phosphoglucosamine mutase (448 aa).

The active-site Phosphoserine intermediate is S100. The Mg(2+) site is built by S100, D240, D242, and D244. S100 bears the Phosphoserine mark.

This sequence belongs to the phosphohexose mutase family. The cofactor is Mg(2+). In terms of processing, activated by phosphorylation.

The enzyme catalyses alpha-D-glucosamine 1-phosphate = D-glucosamine 6-phosphate. In terms of biological role, catalyzes the conversion of glucosamine-6-phosphate to glucosamine-1-phosphate. This Bacillus anthracis (strain A0248) protein is Phosphoglucosamine mutase.